Reading from the N-terminus, the 367-residue chain is Homeobox protein Nkx-6.1 (367 aa).

The interval 36–133 is disordered; the sequence is YPAAYPPLPA…SSSSSSSASA (98 aa). Composition is skewed to low complexity over residues 48–59, 78–91, and 110–133; these read PSSSSSSSSSSS, GGLS…QQLS, and ASGA…SASA. Residues 102–268 are repressor domain; it reads LSRPSMPVAS…KYLAGPERAR (167 aa). Arginine 189 bears the Asymmetric dimethylarginine mark. Positions 236–295 form a DNA-binding region, homeobox; the sequence is RKHTRPTFSGQQIFALEKTFEQTKYLAGPERARLAYSLGMTESQVKVWFQNRRTKWRKKH. The disordered stretch occupies residues 294 to 367; the sequence is KHAAEMATAK…LHASEPESSS (74 aa). Positions 304–317 are enriched in basic and acidic residues; that stretch reads KKQDSETERLKGAS. The interval 306-367 is involved in DNA-binding; sequence QDSETERLKG…LHASEPESSS (62 aa).

Pancreatic beta cells.

The protein localises to the nucleus. Functionally, transcription factor which binds to specific A/T-rich DNA sequences in the promoter regions of a number of genes. Involved in the development of insulin-producing beta cells in the islets of Langerhans at the secondary transition. Together with NKX2-2 and IRX3 acts to restrict the generation of motor neurons to the appropriate region of the neural tube. Belongs to the class II proteins of neuronal progenitor factors, which are induced by SHH signals. This is Homeobox protein Nkx-6.1 (NKX6-1) from Homo sapiens (Human).